The chain runs to 303 residues: Elongation factor Ts (303 aa).

The segment at T81–V84 is involved in Mg(2+) ion dislocation from EF-Tu.

The protein belongs to the EF-Ts family.

The protein localises to the cytoplasm. In terms of biological role, associates with the EF-Tu.GDP complex and induces the exchange of GDP to GTP. It remains bound to the aminoacyl-tRNA.EF-Tu.GTP complex up to the GTP hydrolysis stage on the ribosome. In Mesomycoplasma hyopneumoniae (strain 7448) (Mycoplasma hyopneumoniae), this protein is Elongation factor Ts.